The primary structure comprises 259 residues: Ubiquitin-conjugating enzyme E2 J2 (259 aa).

The Cytoplasmic portion of the chain corresponds to 1-226 (MSNNSNKRAP…AGLPQANRHH (226 aa)). One can recognise a UBC core domain in the interval 12–162 (TATQRLKQDY…DKVFCELFPE (151 aa)). The active-site Glycyl thioester intermediate is Cys-94. Residues 227 to 247 (GLLGGALANLFVIVGFAAFAY) traverse the membrane as a helical; Anchor for type IV membrane protein segment. Topologically, residues 248–259 (TVKYVLRSIAQE) are lumenal.

Belongs to the ubiquitin-conjugating enzyme family. As to quaternary structure, interacts with murid herpesvirus 4 protein K3 (mK3).

Its subcellular location is the endoplasmic reticulum membrane. It carries out the reaction S-ubiquitinyl-[E1 ubiquitin-activating enzyme]-L-cysteine + [E2 ubiquitin-conjugating enzyme]-L-cysteine = [E1 ubiquitin-activating enzyme]-L-cysteine + S-ubiquitinyl-[E2 ubiquitin-conjugating enzyme]-L-cysteine.. It participates in protein modification; protein ubiquitination. Catalyzes the covalent attachment of ubiquitin to other proteins. Seems to function in the selective degradation of misfolded membrane proteins from the endoplasmic reticulum (ERAD). In cooperation with the GATOR2 complex, catalyzes 'Lys-6'-linked ubiquitination of NPRL2. Functionally, in case of infection by the murid herpesvirus 4, its association with the viral E3 ligase K3 mediates ubiquitination of host surface class I (MHC-I) H-2D(b)/H2-D1 and H-2K(b)/H2-K1 molecules before they exit the endoplasmic reticulum, leading to their degradation by the ERAD system, thus blocking the immune detection of virus-infected cells. The complex formed with the murid herpesvirus 4 protein K3 mediates ubiquitination of lysine, as well as serine and threonine residues present in the cytoplasmic tail of surface class I molecules and promotes ubiquitination of hydroxylated serine or threonine residues via ester bonds instead of the classical isopeptide linkage. The chain is Ubiquitin-conjugating enzyme E2 J2 (Ube2j2) from Mus musculus (Mouse).